The primary structure comprises 314 residues: uncharacterized protein (314 aa).

The N-terminal stretch at 1 to 24 is a signal peptide; it reads MKRRRRWRGWLLFPALCFCLLCEA. N-linked (GlcNAc...) asparagine; by host glycans are attached at residues asparagine 28, asparagine 43, asparagine 57, asparagine 77, asparagine 101, asparagine 102, asparagine 109, asparagine 151, asparagine 170, asparagine 217, asparagine 223, asparagine 252, asparagine 255, and asparagine 268. Residues 47 to 114 are compositionally biased toward low complexity; it reads ATTGTTTTSP…TIGTNATSPS (68 aa). Positions 47–116 are disordered; it reads ATTGTTTTSP…GTNATSPSPS (70 aa).

It belongs to the HHV-5 UL116 protein family. Interacts with gH. Interacts with UL148. Highly glycosylated.

It localises to the virion. The protein localises to the host endoplasmic reticulum. Functionally, chaperone protein that cooperates with UL148 to regulate the abundance of gH complexes in virion. First interactor of gH in the host endoplasmic reticulum, regulates the early folding steps of virion assembly. Then, UL148 is recruited and favors the binding of gL. This is an uncharacterized protein from Homo sapiens (Human).